Here is a 478-residue protein sequence, read N- to C-terminus: NADH-quinone oxidoreductase subunit N (478 aa).

13 consecutive transmembrane segments (helical) span residues 7–27 (SFIP…LLIA), 46–66 (ILLV…VLTF), 74–94 (AFGD…FLFS), 109–129 (FTLG…YNLI), 163–183 (FVLG…IYGA), 204–224 (VVLS…LGAV), 237–257 (APTA…FAML), 273–293 (QSLI…ITLV), 300–320 (LLAY…IAAN), 328–348 (MFYT…IVAL), 371–391 (LALM…FVGF), 405–425 (GFTW…FYYL), and 451–471 (WAVS…SSLI).

This sequence belongs to the complex I subunit 2 family. In terms of assembly, NDH-1 is composed of 14 different subunits. Subunits NuoA, H, J, K, L, M, N constitute the membrane sector of the complex.

The protein resides in the cell inner membrane. It carries out the reaction a quinone + NADH + 5 H(+)(in) = a quinol + NAD(+) + 4 H(+)(out). In terms of biological role, NDH-1 shuttles electrons from NADH, via FMN and iron-sulfur (Fe-S) centers, to quinones in the respiratory chain. The immediate electron acceptor for the enzyme in this species is believed to be ubiquinone. Couples the redox reaction to proton translocation (for every two electrons transferred, four hydrogen ions are translocated across the cytoplasmic membrane), and thus conserves the redox energy in a proton gradient. The protein is NADH-quinone oxidoreductase subunit N of Hydrogenovibrio crunogenus (strain DSM 25203 / XCL-2) (Thiomicrospira crunogena).